The chain runs to 316 residues: Ribonuclease Z (316 aa).

Zn(2+) is bound by residues H61, H63, D65, H66, H152, D220, and H279. D65 acts as the Proton acceptor in catalysis.

This sequence belongs to the RNase Z family. In terms of assembly, homodimer. Requires Zn(2+) as cofactor.

The catalysed reaction is Endonucleolytic cleavage of RNA, removing extra 3' nucleotides from tRNA precursor, generating 3' termini of tRNAs. A 3'-hydroxy group is left at the tRNA terminus and a 5'-phosphoryl group is left at the trailer molecule.. Zinc phosphodiesterase, which displays some tRNA 3'-processing endonuclease activity. Probably involved in tRNA maturation, by removing a 3'-trailer from precursor tRNA. The polypeptide is Ribonuclease Z (Clostridium perfringens (strain ATCC 13124 / DSM 756 / JCM 1290 / NCIMB 6125 / NCTC 8237 / Type A)).